Consider the following 586-residue polypeptide: Pescadillo homolog (586 aa).

The interval methionine 1–valine 54 is required for 28S ribosomal RNA processing. Residues methionine 1 to glutamate 257 form a sufficient for nucleolar localization region. Lysine 98 carries the post-translational modification N6-acetyllysine. The tract at residues valine 305–proline 414 is sufficient for interaction with MAP1B. The 94-residue stretch at lysine 321–proline 414 folds into the BRCT domain. The interval glycine 447–glutamine 508 is disordered. The segment covering glycine 451 to glutamate 491 has biased composition (acidic residues). Lysine 515 participates in a covalent cross-link: Glycyl lysine isopeptide (Lys-Gly) (interchain with G-Cter in SUMO1); alternate. Residue lysine 515 forms a Glycyl lysine isopeptide (Lys-Gly) (interchain with G-Cter in SUMO2); alternate linkage. The interval methionine 537–valine 586 is required for 28S ribosomal RNA processing. The segment covering lysine 562–glutamate 577 has biased composition (basic and acidic residues). The segment at lysine 562–valine 586 is disordered.

It belongs to the pescadillo family. Component of the PeBoW complex, composed of BOP1, PES1 and WDR12. The complex is held together by BOP1, which interacts with PES1 via its N-terminal domain and with WDR12 via a high-affinity interaction between the seven-bladed beta-propeller domains of the 2 proteins. The PeBoW complex associates with the 66S pre-ribosome. The PeBoW complex also associates with DDX27, PES1 interacts directly with DDX27. Interacts with IRS1 and UBTF. May interact with MAP1B. Post-translationally, sumoylated.

Its subcellular location is the nucleus. The protein localises to the nucleolus. It is found in the nucleoplasm. It localises to the chromosome. Component of the PeBoW complex, which is required for maturation of 28S and 5.8S ribosomal RNAs and formation of the 60S ribosome. The polypeptide is Pescadillo homolog (Pes1) (Rattus norvegicus (Rat)).